Reading from the N-terminus, the 457-residue chain is MATLRQVFSISELRQKIFFTFSLLALCRIGVFIPVPGINGDRAVAYFNQLLGSSQNLFQLADIFSGGAFAQMTVIALGVVPYISASIIVQLLVVFMPTLQREMREAPDQGKRKLGRMTRLFTLLLACVQSLLFAKFALRMNLVVPGIVLPAMLSLKLFGIPCVFYLTTVVVMTTGTLLLMWIGEQISDKGIGNGISLIITLGMLASFPSVLGSIFNKLNLGSQDPSEFGIVSLLVLCAVFVFVLMATVLIIEGVRKVPVQHARRIIGRREVLGGGSYLPLKVNYAGVIPVIFASSLLMFPATIGQFLSSESSWLKRIATMLSPGSVVYSIFYVLLIIFFTYFWTATQFRPEQIASEMKKNGAFIPGIRQGKPTQSYLEYTMNRVTLLGAVFLAVVAILPSILGRILRVDANVSYFLGGTAMLIVVGVVLDTMKQIDAFLLVRRYDGVLKKDRPKGRR.

The next 10 membrane-spanning stretches (helical) occupy residues 17-37 (IFFT…PVPG), 75-95 (IALG…LVVF), 120-140 (LFTL…ALRM), 163-183 (VFYL…MWIG), 195-215 (ISLI…GSIF), 230-250 (IVSL…TVLI), 287-307 (VIPV…GQFL), 326-346 (VVYS…WTAT), 386-406 (LLGA…GRIL), and 412-432 (VSYF…LDTM).

The protein belongs to the SecY/SEC61-alpha family. In terms of assembly, component of the Sec protein translocase complex. Heterotrimer consisting of SecY, SecE and SecG subunits. The heterotrimers can form oligomers, although 1 heterotrimer is thought to be able to translocate proteins. Interacts with the ribosome. Interacts with SecDF, and other proteins may be involved. Interacts with SecA.

Its subcellular location is the cell inner membrane. Functionally, the central subunit of the protein translocation channel SecYEG. Consists of two halves formed by TMs 1-5 and 6-10. These two domains form a lateral gate at the front which open onto the bilayer between TMs 2 and 7, and are clamped together by SecE at the back. The channel is closed by both a pore ring composed of hydrophobic SecY resides and a short helix (helix 2A) on the extracellular side of the membrane which forms a plug. The plug probably moves laterally to allow the channel to open. The ring and the pore may move independently. The protein is Protein translocase subunit SecY of Chlamydia muridarum (strain MoPn / Nigg).